The sequence spans 308 residues: Acyl transferase (308 aa).

Active-site charge relay system residues include Ser116, Asp213, and His243.

Belongs to the LuxD family.

Its pathway is lipid metabolism; fatty acid reduction for biolumincescence. Its function is as follows. Acyl transferase is part of the fatty acid reductase system required for aldehyde biosynthesis; it produces fatty acids for the luminescent reaction. The protein is Acyl transferase of Shewanella hanedai (Alteromonas hanedai).